Here is a 309-residue protein sequence, read N- to C-terminus: Transcription initiation factor IIB 1 (309 aa).

2 tandem repeats follow at residues 125 to 208 and 219 to 300.

The protein belongs to the TFIIB family.

Stabilizes TBP binding to an archaeal box-A promoter. Also responsible for recruiting RNA polymerase II to the pre-initiation complex (DNA-TBP-TFIIB). The chain is Transcription initiation factor IIB 1 from Saccharolobus solfataricus (strain ATCC 35092 / DSM 1617 / JCM 11322 / P2) (Sulfolobus solfataricus).